The following is a 264-amino-acid chain: Occludin/ELL domain-containing protein 1 (264 aa).

Over residues 1–10 (MHNPDGSASP) the composition is skewed to polar residues. Positions 1–112 (MHNPDGSASP…QPGPHKAKTK (112 aa)) are disordered. The segment covering 96–105 (PRPPCQPQPG) has biased composition (pro residues). Residues 147–257 (PDYELKYPPV…QIQKFDDQGD (111 aa)) form the OCEL domain.

Belongs to the ELL/occludin family.

In Homo sapiens (Human), this protein is Occludin/ELL domain-containing protein 1 (OCEL1).